A 369-amino-acid polypeptide reads, in one-letter code: Epoxyqueuosine reductase (369 aa).

Catalysis depends on Asp135, which acts as the Proton donor. The 4Fe-4S ferredoxin-type domain occupies 177–209 (IPLPVDEPSENQCGKCTACITSCPTNAIVAEGV). Cys189, Cys192, Cys195, Cys199, Cys215, Cys242, Cys245, and Cys249 together coordinate [4Fe-4S] cluster.

Belongs to the QueG family. In terms of assembly, monomer. Cob(II)alamin serves as cofactor. It depends on [4Fe-4S] cluster as a cofactor.

It is found in the cytoplasm. It carries out the reaction epoxyqueuosine(34) in tRNA + AH2 = queuosine(34) in tRNA + A + H2O. Its pathway is tRNA modification; tRNA-queuosine biosynthesis. Its function is as follows. Catalyzes the conversion of epoxyqueuosine (oQ) to queuosine (Q), which is a hypermodified base found in the wobble positions of tRNA(Asp), tRNA(Asn), tRNA(His) and tRNA(Tyr). The polypeptide is Epoxyqueuosine reductase (Vibrio cholerae serotype O1 (strain ATCC 39315 / El Tor Inaba N16961)).